A 172-amino-acid polypeptide reads, in one-letter code: Protein-export protein SecB (172 aa).

This sequence belongs to the SecB family. In terms of assembly, homotetramer, a dimer of dimers. One homotetramer interacts with 1 SecA dimer.

The protein resides in the cytoplasm. Its function is as follows. One of the proteins required for the normal export of preproteins out of the cell cytoplasm. It is a molecular chaperone that binds to a subset of precursor proteins, maintaining them in a translocation-competent state. It also specifically binds to its receptor SecA. In Xylella fastidiosa (strain Temecula1 / ATCC 700964), this protein is Protein-export protein SecB.